A 214-amino-acid polypeptide reads, in one-letter code: Orotate phosphoribosyltransferase (214 aa).

5-phospho-alpha-D-ribose 1-diphosphate is bound by residues arginine 125, lysine 126, lysine 129, histidine 131, and glutamate 151–serine 159. Residues threonine 155 and arginine 183 each coordinate orotate.

This sequence belongs to the purine/pyrimidine phosphoribosyltransferase family. PyrE subfamily. As to quaternary structure, homodimer. The cofactor is Mg(2+).

It carries out the reaction orotidine 5'-phosphate + diphosphate = orotate + 5-phospho-alpha-D-ribose 1-diphosphate. The protein operates within pyrimidine metabolism; UMP biosynthesis via de novo pathway; UMP from orotate: step 1/2. Catalyzes the transfer of a ribosyl phosphate group from 5-phosphoribose 1-diphosphate to orotate, leading to the formation of orotidine monophosphate (OMP). The protein is Orotate phosphoribosyltransferase of Tropheryma whipplei (strain TW08/27) (Whipple's bacillus).